Consider the following 141-residue polypeptide: Galactose-6-phosphate isomerase subunit LacA (141 aa).

The protein belongs to the LacAB/RpiB family. Heteromultimeric protein consisting of LacA and LacB.

It carries out the reaction aldehydo-D-galactose 6-phosphate = keto-D-tagatose 6-phosphate. Its pathway is carbohydrate metabolism; D-galactose 6-phosphate degradation; D-tagatose 6-phosphate from D-galactose 6-phosphate: step 1/1. The chain is Galactose-6-phosphate isomerase subunit LacA from Streptococcus pneumoniae (strain 70585).